Reading from the N-terminus, the 954-residue chain is MDLDPYASMQVGMRVVRGVDWKWGSQDSGEGNVGTVVEIGRTGSPTTPDKTVVVQWDQGNRTNYRTGFQGAYDLLLYDNAQIGVRHPNIICDCCKKHGIRGMRWKCKMCFDYDLCTQCYMNNKHDLSHAFERYETAHSQPVLVSPRQNLTRITLKGTFQGAKVVRGPDWEWGNQDGGEGKTGRVVDIRGWDVETGRSVASVTWSDGTTNVYRVGHKGKVDLKCTVEASGGFYYKEHLPKLGKPAELQRKESTDRHPFQHGDKVKCLLDIDILREMQEGHGGWNPKMAEFIGQTGTVHRITDRGDVRVQFNSETRWTFHPGALTKLNTFWVGDVVRVIDDMETVKRFQPGHGEWTDEMAPTLGHIGKVIKVYGDGDLRVSVGDQSWTFNPACLTAYQRDEEANLMTTENAKESKSTLITVLEKLLSQKTESDHAGCLVIWAALNNAAKVRELLQKYPDKVDNKNQGRTALQIASYQGHLDVVKILLQAHATVNLRDEEGDTALHYAAFGNQADVARVLMAKGAGADLLNNAKCTALYVAVSQGFTEVVQALCELNCDVNLPDSHGDTPLHYAITADYKVIIEILTEVPNIDFTVQNCQGFNLLHYSALKGNKLAIKKILARARQLVDSKKEDGFTALHLAALNNHKEVAEILIKEGRCDVNVKNNRNQTPLHLAIIQGHVGLVQLLVSEGSDVNAEDEDGDTAMHIALERQQLMSVLMEKREGEMGSSLFSKLQASGFLGNVELNVGTAIACYLAQEGADINYANHRGKSPLDLITDGRIVQIIKDFSQKFREQQVSSDCSAITCSLRRVHTTPNTMTNLSVSSVAVPTECLVCSELALLIHFFPCQHSIVCEECSRRMKKCIKCQVTITKKLKRDSTEVECSPSSESTDQRKLMEELQNRYRQMEERITCPICIDDQIKLVFQCGHGSCPDCSTALTVCPICRQAIRERIQIFV.

Residues 1–80 (MDLDPYASMQ…AYDLLLYDNA (80 aa)) enclose the MIB/HERC2 1 domain. The segment at 86–138 (HPNIICDCCKKHGIRGMRWKCKMCFDYDLCTQCYMNNKHDLSHAFERYETAHS) adopts a ZZ-type zinc-finger fold. The Zn(2+) site is built by cysteine 91, cysteine 94, cysteine 106, cysteine 109, cysteine 115, cysteine 118, histidine 124, and histidine 128. An MIB/HERC2 2 domain is found at 149 to 227 (LTRITLKGTF…KVDLKCTVEA (79 aa)). ANK repeat units follow at residues 464 to 493 (QGRTALQIASYQGHLDVVKILLQAHATVNL), 497 to 526 (EGDTALHYAAFGNQADVARVLMAKGAGADL), 530 to 559 (AKCTALYVAVSQGFTEVVQALCELNCDVNL), 563 to 591 (HGDTPLHYAITADYKVIIEILTEVPNIDF), 597 to 626 (QGFNLLHYSALKGNKLAIKKILARARQLVD), 631 to 661 (DGFTALHLAALNNHKEVAEILIKEGRCDVNV), 665 to 694 (RNQTPLHLAIIQGHVGLVQLLVSEGSDVNA), 698 to 726 (DGDTAMHIALERQQLMSVLMEKREGEMGS), and 766 to 795 (RGKSPLDLITDGRIVQIIKDFSQKFREQQV). 2 RING-type zinc fingers span residues 830 to 865 (CLVCSELALLIHFFPCQHSIVCEECSRRMKKCIKCQ) and 910 to 943 (CPICIDDQIKLVFQCGHGSCPDCSTALTVCPICR).

It is found in the cytoplasm. The enzyme catalyses S-ubiquitinyl-[E2 ubiquitin-conjugating enzyme]-L-cysteine + [acceptor protein]-L-lysine = [E2 ubiquitin-conjugating enzyme]-L-cysteine + N(6)-ubiquitinyl-[acceptor protein]-L-lysine.. Its pathway is protein modification; protein ubiquitination. Its function is as follows. E3 ubiquitin-protein ligase that mediates ubiquitination of Delta receptors, which act as ligands of Notch proteins. Positively regulates the Delta-mediated Notch signaling by ubiquitinating the intracellular domain of Delta, leading to endocytosis of Delta receptors. The protein is E3 ubiquitin-protein ligase MIB2 (MIB2) of Gallus gallus (Chicken).